The following is a 263-amino-acid chain: Ribonuclease HII (263 aa).

An RNase H type-2 domain is found at 71-262; sequence QAIAGIDEVG…VKSMCCDSTN (192 aa). The a divalent metal cation site is built by Asp-77, Glu-78, and Asp-172.

Belongs to the RNase HII family. It depends on Mn(2+) as a cofactor. Mg(2+) is required as a cofactor.

It localises to the cytoplasm. The enzyme catalyses Endonucleolytic cleavage to 5'-phosphomonoester.. Its function is as follows. Endonuclease that specifically degrades the RNA of RNA-DNA hybrids. This Streptococcus pyogenes serotype M4 (strain MGAS10750) protein is Ribonuclease HII.